A 227-amino-acid chain; its full sequence is Paired immunoglobulin-like type 2 receptor beta (227 aa).

The signal sequence occupies residues M1–L19. Over Q20–R191 the chain is Extracellular. An Ig-like V-type domain is found at P21–K143. Residue N100 is glycosylated (N-linked (GlcNAc...) asparagine). The helical transmembrane segment at V192 to L212 threads the bilayer. Residues W213–F227 lie on the Cytoplasmic side of the membrane.

The protein localises to the membrane. Functionally, paired receptors consist of highly related activating and inhibitory receptors and are widely involved in the regulation of the immune system. PILRB is thought to act as a cellular signaling activating receptor that associates with ITAM-bearing adapter molecules on the cell surface. This Homo sapiens (Human) protein is Paired immunoglobulin-like type 2 receptor beta (PILRB).